Consider the following 130-residue polypeptide: Large ribosomal subunit protein uL14 (130 aa).

Belongs to the universal ribosomal protein uL14 family. As to quaternary structure, part of the 50S ribosomal subunit. Forms a cluster with proteins L3 and L19. In the 70S ribosome, L14 and L19 interact and together make contacts with the 16S rRNA in bridges B5 and B8.

Its function is as follows. Binds to 23S rRNA. Forms part of two intersubunit bridges in the 70S ribosome. This is Large ribosomal subunit protein uL14 from Leptospira interrogans serogroup Icterohaemorrhagiae serovar copenhageni (strain Fiocruz L1-130).